Consider the following 83-residue polypeptide: RNA-binding protein Hfq (83 aa).

The Sm domain maps to 11-71; that stretch reads DVFLNYIRKN…ISTIMPASPV (61 aa).

It belongs to the Hfq family. Homohexamer.

In terms of biological role, RNA chaperone that binds small regulatory RNA (sRNAs) and mRNAs to facilitate mRNA translational regulation in response to envelope stress, environmental stress and changes in metabolite concentrations. Also binds with high specificity to tRNAs. The polypeptide is RNA-binding protein Hfq (Rhodospirillum rubrum (strain ATCC 11170 / ATH 1.1.1 / DSM 467 / LMG 4362 / NCIMB 8255 / S1)).